The following is a 122-amino-acid chain: Urocortin (122 aa).

The N-terminal stretch at 1-25 (MIQRGRATLLVALLLLAQLRPESSQ) is a signal peptide. Positions 26–80 (WSPAAAAATGVQDPNLRWSPGVRNQGGGVRALLLLLAERFPRRAGSEPAGERQRR) are excised as a propeptide. Val-120 carries the post-translational modification Valine amide.

This sequence belongs to the sauvagine/corticotropin-releasing factor/urotensin I family. As to quaternary structure, interacts with CRHR1 and CRHR2 (via their N-terminal extracellular domain). As to expression, in the organ of Corti, detected in the inner hair cell region (at protein level). Expressed in skin (at protein level).

The protein resides in the secreted. Acts in vitro to stimulate the secretion of adrenocorticotropic hormone (ACTH). Binds with high affinity to CRF receptor types 1, 2-alpha, and 2-beta. Plays a role in the establishment of normal hearing thresholds. Reduces food intake and regulates ghrelin levels in gastric body and plasma. In Mus musculus (Mouse), this protein is Urocortin (Ucn).